The following is a 161-amino-acid chain: Sterile alpha motif domain-containing protein 12 (161 aa).

The tract at residues 44–64 is disordered; the sequence is QKVPDQKGTPKRLQGEAETAK. Residues 77 to 143 enclose the SAM domain; the sequence is WTQQDVCKWL…LQQVLQLKVR (67 aa).

The chain is Sterile alpha motif domain-containing protein 12 (Samd12) from Mus musculus (Mouse).